A 198-amino-acid chain; its full sequence is Peroxiredoxin-2 (198 aa).

An N-acetylalanine modification is found at alanine 2. Residues 6 to 164 enclose the Thioredoxin domain; the sequence is AQIGKSAPDF…ALRLVQAFQY (159 aa). Serine 11 carries the post-translational modification Phosphoserine. Cysteine 51 functions as the Cysteine sulfenic acid (-SOH) intermediate in the catalytic mechanism. Position 112 is a phosphoserine (serine 112). Threonine 182 carries the phosphothreonine modification. Lysine 196 bears the N6-acetyllysine mark.

It belongs to the peroxiredoxin family. AhpC/Prx1 subfamily. As to quaternary structure, homodimer; disulfide-linked, upon oxidation. 5 homodimers assemble to form a ring-like decamer. Interacts with TIPIN. The enzyme can be inactivated by further oxidation of the cysteine sulfenic acid (C(P)-SOH) to sulphinic acid (C(P)-SO2H) instead of its condensation to a disulfide bond. It can be reactivated by forming a transient disulfide bond with sulfiredoxin SRXN1, which reduces the cysteine sulfinic acid in an ATP- and Mg-dependent manner. In terms of processing, acetylation increases resistance to transition to high molecular-mass complexes. Deacetylated by HDAC6 which decreases reducing activity. In terms of tissue distribution, widely expressed with highest levels in bone marrow. High levels also found in heart, brain, kidney and skeletal muscle. Lower levels in liver, lung and thymus.

It is found in the cytoplasm. The catalysed reaction is a hydroperoxide + [thioredoxin]-dithiol = an alcohol + [thioredoxin]-disulfide + H2O. Functionally, thiol-specific peroxidase that catalyzes the reduction of hydrogen peroxide and organic hydroperoxides to water and alcohols, respectively. Plays a role in cell protection against oxidative stress by detoxifying peroxides and as sensor of hydrogen peroxide-mediated signaling events. Might participate in the signaling cascades of growth factors and tumor necrosis factor-alpha by regulating the intracellular concentrations of H(2)O(2). This Mus musculus (Mouse) protein is Peroxiredoxin-2 (Prdx2).